The following is a 503-amino-acid chain: Probable cytosol aminopeptidase (503 aa).

Mn(2+) contacts are provided by lysine 270 and aspartate 275. Lysine 282 is a catalytic residue. Mn(2+) contacts are provided by aspartate 293, aspartate 352, and glutamate 354. Arginine 356 is a catalytic residue.

The protein belongs to the peptidase M17 family. Requires Mn(2+) as cofactor.

It is found in the cytoplasm. The catalysed reaction is Release of an N-terminal amino acid, Xaa-|-Yaa-, in which Xaa is preferably Leu, but may be other amino acids including Pro although not Arg or Lys, and Yaa may be Pro. Amino acid amides and methyl esters are also readily hydrolyzed, but rates on arylamides are exceedingly low.. It catalyses the reaction Release of an N-terminal amino acid, preferentially leucine, but not glutamic or aspartic acids.. In terms of biological role, presumably involved in the processing and regular turnover of intracellular proteins. Catalyzes the removal of unsubstituted N-terminal amino acids from various peptides. The polypeptide is Probable cytosol aminopeptidase (Pectobacterium atrosepticum (strain SCRI 1043 / ATCC BAA-672) (Erwinia carotovora subsp. atroseptica)).